The following is a 98-amino-acid chain: Large ribosomal subunit protein uL23 (98 aa).

It belongs to the universal ribosomal protein uL23 family. In terms of assembly, part of the 50S ribosomal subunit. Contacts protein L29, and trigger factor when it is bound to the ribosome.

Functionally, one of the early assembly proteins it binds 23S rRNA. One of the proteins that surrounds the polypeptide exit tunnel on the outside of the ribosome. Forms the main docking site for trigger factor binding to the ribosome. The polypeptide is Large ribosomal subunit protein uL23 (Frankia alni (strain DSM 45986 / CECT 9034 / ACN14a)).